An 88-amino-acid polypeptide reads, in one-letter code: Phosphocarrier protein HPr (88 aa).

One can recognise an HPr domain in the interval methionine 1 to isoleucine 88. The active-site Pros-phosphohistidine intermediate is the histidine 15. Serine 47 bears the Phosphoserine; by HPrK/P mark.

It belongs to the HPr family.

The protein localises to the cytoplasm. Phosphorylation on Ser-47 inhibits the phosphoryl transfer from enzyme I to HPr. In terms of biological role, general (non sugar-specific) component of the phosphoenolpyruvate-dependent sugar phosphotransferase system (sugar PTS). This major carbohydrate active-transport system catalyzes the phosphorylation of incoming sugar substrates concomitantly with their translocation across the cell membrane. The phosphoryl group from phosphoenolpyruvate (PEP) is transferred to the phosphoryl carrier protein HPr by enzyme I. Phospho-HPr then transfers it to the PTS EIIA domain. Its function is as follows. P-Ser-HPr interacts with the catabolite control protein A (CcpA), forming a complex that binds to DNA at the catabolite response elements cre, operator sites preceding a large number of catabolite-regulated genes. Thus, P-Ser-HPr is a corepressor in carbon catabolite repression (CCR), a mechanism that allows bacteria to coordinate and optimize the utilization of available carbon sources. P-Ser-HPr also plays a role in inducer exclusion, in which it probably interacts with several non-PTS permeases and inhibits their transport activity. The chain is Phosphocarrier protein HPr (ptsH) from Mycoplasma genitalium (strain ATCC 33530 / DSM 19775 / NCTC 10195 / G37) (Mycoplasmoides genitalium).